The primary structure comprises 368 residues: N-acetylneuraminate epimerase (368 aa).

The N-terminal stretch at M1–A19 is a signal peptide. Kelch repeat units follow at residues T40 to D84, N86 to N137, K139 to A173, Y174 to G219, T222 to G265, E287 to N336, and L338 to Q367. E228 (proton acceptor) is an active-site residue.

The protein belongs to the NanM family. As to quaternary structure, homodimer.

Its subcellular location is the periplasm. The catalysed reaction is N-acetyl-alpha-neuraminate = N-acetyl-beta-neuraminate. Its function is as follows. Converts alpha-N-acetylneuranimic acid (Neu5Ac) to the beta-anomer, accelerating the equilibrium between the alpha- and beta-anomers. Probably facilitates sialidase-negative bacteria to compete successfully for limited amounts of extracellular Neu5Ac, which is likely taken up in the beta-anomer. In addition, the rapid removal of sialic acid from solution might be advantageous to the bacterium to damp down host responses. The protein is N-acetylneuraminate epimerase of Escherichia coli O139:H28 (strain E24377A / ETEC).